The primary structure comprises 187 residues: Large ribosomal subunit protein uL10 (187 aa).

The protein belongs to the universal ribosomal protein uL10 family. Part of the ribosomal stalk of the 50S ribosomal subunit. The N-terminus interacts with L11 and the large rRNA to form the base of the stalk. The C-terminus forms an elongated spine to which L12 dimers bind in a sequential fashion forming a multimeric L10(L12)X complex.

In terms of biological role, forms part of the ribosomal stalk, playing a central role in the interaction of the ribosome with GTP-bound translation factors. This chain is Large ribosomal subunit protein uL10, found in Synechococcus sp. (strain JA-2-3B'a(2-13)) (Cyanobacteria bacterium Yellowstone B-Prime).